The chain runs to 150 residues: MRLYIGSLLICVLLGIVPFATANTNRSGYEEHRNYLLNIFHNPLVNDSIKEKNIPELIAFYQRYPTDIPLSDADRQQFERFIHDYREYREVLVDGVPPQGGSFGNIFGHFLGRVGTRYISSLFNKKREEGQSNHANSPTTSPSRIQKMTK.

Positions 1–22 are cleaved as a signal peptide; that stretch reads MRLYIGSLLICVLLGIVPFATA. Residues 127–150 are disordered; sequence REEGQSNHANSPTTSPSRIQKMTK. Residues 132–150 show a composition bias toward polar residues; the sequence is SNHANSPTTSPSRIQKMTK.

This sequence belongs to the Turandot family.

The protein localises to the secreted. In terms of biological role, a humoral factor that may play a role in stress tolerance. The polypeptide is Protein Turandot X1/X2 (Drosophila sechellia (Fruit fly)).